We begin with the raw amino-acid sequence, 514 residues long: AAA-ATPase ASD, mitochondrial (514 aa).

Residues 7–24 (VWTNTGSALASLVFIYTI) form a helical membrane-spanning segment. 250 to 257 (GPPGTGKS) is an ATP binding site. Disordered stretches follow at residues 311–342 (GQRK…ENKG) and 467–514 (KEEA…TMKD). Composition is skewed to basic and acidic residues over residues 331–342 (KQMKKDQGENKG) and 467–502 (KEEA…KEEK).

The protein belongs to the AAA ATPase family. BCS1 subfamily. Requires Mg(2+) as cofactor. As to expression, expressed in seeds, specifically in the embryo.

The protein localises to the mitochondrion membrane. It catalyses the reaction ATP + H2O = ADP + phosphate + H(+). In terms of biological role, required to regulate morphology and anatomy during seed maturation. This is AAA-ATPase ASD, mitochondrial (AATP1) from Arabidopsis thaliana (Mouse-ear cress).